The primary structure comprises 116 residues: Peptidyl-tRNA hydrolase (116 aa).

This sequence belongs to the PTH2 family.

It localises to the cytoplasm. It carries out the reaction an N-acyl-L-alpha-aminoacyl-tRNA + H2O = an N-acyl-L-amino acid + a tRNA + H(+). The natural substrate for this enzyme may be peptidyl-tRNAs which drop off the ribosome during protein synthesis. The sequence is that of Peptidyl-tRNA hydrolase from Methanococcus vannielii (strain ATCC 35089 / DSM 1224 / JCM 13029 / OCM 148 / SB).